Consider the following 419-residue polypeptide: Gamma-glutamyl phosphate reductase (419 aa).

This sequence belongs to the gamma-glutamyl phosphate reductase family.

Its subcellular location is the cytoplasm. It catalyses the reaction L-glutamate 5-semialdehyde + phosphate + NADP(+) = L-glutamyl 5-phosphate + NADPH + H(+). The protein operates within amino-acid biosynthesis; L-proline biosynthesis; L-glutamate 5-semialdehyde from L-glutamate: step 2/2. Functionally, catalyzes the NADPH-dependent reduction of L-glutamate 5-phosphate into L-glutamate 5-semialdehyde and phosphate. The product spontaneously undergoes cyclization to form 1-pyrroline-5-carboxylate. The protein is Gamma-glutamyl phosphate reductase of Azobacteroides pseudotrichonymphae genomovar. CFP2.